We begin with the raw amino-acid sequence, 92 residues long: Movement protein (92 aa).

Residues 38–58 form a helical membrane-spanning segment; it reads VIALVVILVSVGVFYLAYTLF.

This sequence belongs to the mastrevirus movement protein family. Interacts with the capsid protein (CP). Part of a MP-CP-viral DNA complex.

The protein resides in the host membrane. Its function is as follows. Involved in the viral transport within, and between cells. This Phaseolus vulgaris (Kidney bean) protein is Movement protein.